The following is a 378-amino-acid chain: Glutamate 5-kinase (378 aa).

Position 19 (lysine 19) interacts with ATP. Positions 59, 146, and 158 each coordinate substrate. Residues threonine 178–aspartate 179 and threonine 220–lysine 226 contribute to the ATP site. Positions glutamine 285–lysine 363 constitute a PUA domain.

Belongs to the glutamate 5-kinase family.

It localises to the cytoplasm. It catalyses the reaction L-glutamate + ATP = L-glutamyl 5-phosphate + ADP. It participates in amino-acid biosynthesis; L-proline biosynthesis; L-glutamate 5-semialdehyde from L-glutamate: step 1/2. Functionally, catalyzes the transfer of a phosphate group to glutamate to form L-glutamate 5-phosphate. This is Glutamate 5-kinase from Moorella thermoacetica (strain ATCC 39073 / JCM 9320).